Reading from the N-terminus, the 601-residue chain is Ubiquitin carboxyl-terminal hydrolase MINDY-2 (601 aa).

A disordered region spans residues 1 to 205; that stretch reads MENSPDSPQP…LCKEEEEDPA (205 aa). The segment covering 24 to 34 has biased composition (basic and acidic residues); it reads EGRRRGGREAE. Phosphothreonine is present on threonine 62. Phosphoserine is present on serine 82. 3 stretches are compositionally biased toward low complexity: residues 127 to 141, 148 to 169, and 186 to 195; these read EEPSSTGAPSSSCSE, SPSLDSLESFSNLHSFPSSSEF, and GAAGPPRAAP. Residue cysteine 244 is the Nucleophile of the active site. Histidine 426 serves as the catalytic Proton acceptor. The segment at 485 to 537 is ubiquitin-binding domain (UBD); the sequence is GQQDQIDQDYLMALSLQQEQQSQEINWEQIPEGISDLELAKKLQEEEDRRASQ. The interval 534–601 is disordered; sequence RASQYYQEQE…EKEKNSCVIL (68 aa). Positions 536 to 570 are enriched in low complexity; the sequence is SQYYQEQEQAQAVVTTTTPSTQAQQGQPAQASPSS. A compositionally biased stretch (basic and acidic residues) spans 577–601; sequence SERKRKEPREKDKEKEKEKNSCVIL.

It belongs to the MINDY deubiquitinase family. FAM63 subfamily.

The enzyme catalyses Thiol-dependent hydrolysis of ester, thioester, amide, peptide and isopeptide bonds formed by the C-terminal Gly of ubiquitin (a 76-residue protein attached to proteins as an intracellular targeting signal).. Functionally, hydrolase that can remove 'Lys-48'-linked conjugated ubiquitin from proteins. Can also bind to polyubiquitin chains of different linkage types, including 'Lys-6', 'Lys-11', 'Lys-29', 'Lys-33' and 'Lys-63'. May play a regulatory role at the level of protein turnover. The sequence is that of Ubiquitin carboxyl-terminal hydrolase MINDY-2 (Mindy2) from Mus musculus (Mouse).